Consider the following 273-residue polypeptide: ATP synthase subunit delta (273 aa).

It belongs to the ATPase delta chain family. As to quaternary structure, F-type ATPases have 2 components, F(1) - the catalytic core - and F(0) - the membrane proton channel. F(1) has five subunits: alpha(3), beta(3), gamma(1), delta(1), epsilon(1). F(0) has three main subunits: a(1), b(2) and c(10-14). The alpha and beta chains form an alternating ring which encloses part of the gamma chain. F(1) is attached to F(0) by a central stalk formed by the gamma and epsilon chains, while a peripheral stalk is formed by the delta and b chains.

It localises to the cell membrane. Functionally, f(1)F(0) ATP synthase produces ATP from ADP in the presence of a proton or sodium gradient. F-type ATPases consist of two structural domains, F(1) containing the extramembraneous catalytic core and F(0) containing the membrane proton channel, linked together by a central stalk and a peripheral stalk. During catalysis, ATP synthesis in the catalytic domain of F(1) is coupled via a rotary mechanism of the central stalk subunits to proton translocation. In terms of biological role, this protein is part of the stalk that links CF(0) to CF(1). It either transmits conformational changes from CF(0) to CF(1) or is implicated in proton conduction. The polypeptide is ATP synthase subunit delta (Streptomyces avermitilis (strain ATCC 31267 / DSM 46492 / JCM 5070 / NBRC 14893 / NCIMB 12804 / NRRL 8165 / MA-4680)).